The sequence spans 201 residues: Iron-sulfur flavoprotein AF_1896 (201 aa).

Positions 46, 49, 52, and 57 each coordinate [4Fe-4S] cluster.

This sequence belongs to the SsuE family. Isf subfamily. As to quaternary structure, homodimer. Requires FMN as cofactor. It depends on [4Fe-4S] cluster as a cofactor.

Redox-active protein probably involved in electron transport. In Archaeoglobus fulgidus (strain ATCC 49558 / DSM 4304 / JCM 9628 / NBRC 100126 / VC-16), this protein is Iron-sulfur flavoprotein AF_1896.